The following is a 75-amino-acid chain: Conotoxin ar11a (75 aa).

The N-terminal stretch at 1–19 (MKLCATFLLVLVTLPLVTG) is a signal peptide. A propeptide spanning residues 20 to 36 (EKSSERSLSGAILRGVR) is cleaved from the precursor. Disulfide bonds link Cys39–Cys53, Cys46–Cys58, Cys52–Cys63, and Cys57–Cys70.

In terms of tissue distribution, expressed by the venom duct.

The protein localises to the secreted. Functionally, both natural (L-Leu form) and synthetic (D-Leu from) peptides equally cause sensitivity to touch and body tremor. Neither L-Leu form nor D-Leu form is active on nerve-muscle preparation. This Conus arenatus (Sand-dusted cone) protein is Conotoxin ar11a.